The chain runs to 1282 residues: MTLQETSVLEPTLQGTTTLPGLLAQRVAEHPEAIAVAYRDDKLTFRELASRSAALADYLEHLGVSADDCVGLFVEPSIDLMVGAWGILNAGAAYLPLSPEYPEDRLRYMIENSETKIILAQQRLVSRLRELAPKDVTIVTLRESEAFVRPEGTEAPAARSARPDTLAYVIYTSGSTGKPKGVMIEHRSIVNQLGWLRETYAIDRSKVILQKTPMSFDAAQWEILSPANGATVVMGAPGVYADPEGLIETIVKHNVTTLQCVPTLLQGLIDTEKFPECVSLQQIFSGGEALSRLLAIQTTQEMPGRALINVYGPTETTINSSSFPVDPADLDEGPQSISIGSPVHGTTYHILDKETLKPVGVGEIGELYIGGIQLARGYLHRDDLTAERFLEIELEEGAEPVRLYKTGDLGQWNNDGTVQFAGRADNQVKLRGYRVELDEISLAIENHDWVRNAAVIVKNDGRTGFQNLIACIELSEKEAALMDQGNHGSHHASKKSKLQVKAQLSNPGLRDDAELAARPAFDLEGAEPTPEQRARVFARKTYRFYEGGAVTQADLLGLLGATVTAGYSRKAADLAPAELGQILRWFGQYISEERLLPKYGYASPGALYATQMYFELEGVGGLKPGYYYYQPVRHQLVLISEREATGKATAQIHFIGKKSGIEPVYKNNILEVLEIETGHMVGLFEQILPAYGLDIHDRAYEPAVKDLLDVADEDYYLGTFELVPHAGARDDQAEVYVQTHGGKVAGLPEGQYRYENGELTRFSDDIVLKKHVIAINQSVYQAASFGISVYSRAEEEWLKYITLGKKLQHLMMNGLNLGFMSSGYSSKTGNPLPASRRMDAVLGANGVDSAPMYFFVGGRISDEQIGHEGMREDSVHMRGPAELIRDDLVSFLPDYMIPNRVVVFDRLPLSANGKIDVKALAASDQVNAELVERPFVAPRTETEKEIAAVWEKALRRENASVQDDFFESGGNSLIAVGLVRELNARLGVSLPLQSVLESPTIEKLARRLEREVAQESSRFVRLHAETGKARPVICWPGLGGYPMNLRSLAGEIGLGRSFYGVQSYGINEGETPYETITEMAKKDIEALKEIQPAGPYTLWGYSFGARVAFETAYQLEQAGEKVDNLFLIAPGSPKVRAENGKVWGREASFANRGYTTILFSVFTGTISGPDLDRCLETVTDEASFAEFISELKGIDVDLARRIISVVGQTYEFEYSFHELAERTLQAPISIFKAVGDDYSFLENSSGYSAEPPTVIDLDADHYSLLREDIGELVKHIRYLLGE.

The tract at residues 24–379 (AQRVAEHPEA…GGIQLARGYL (356 aa)) is adenylation. The region spanning 937–1012 (APRTETEKEI…KLARRLEREV (76 aa)) is the Carrier domain. S972 is subject to O-(pantetheine 4'-phosphoryl)serine. A thioesterase region spans residues 1030–1138 (RPVICWPGLG…APGSPKVRAE (109 aa)).

This sequence belongs to the ATP-dependent AMP-binding enzyme family. Pantetheine 4'-phosphate is required as a cofactor.

The catalysed reaction is 2 FMN + 2 L-glutamine + 2 ATP + O2 = indigoidine + 2 FMNH2 + 2 AMP + 2 diphosphate + 2 H2O. The enzyme catalyses FMN + L-glutamine + ATP = 3-amino-1,5-dihydropyridine-2,6-dione + FMNH2 + AMP + diphosphate. It carries out the reaction 2 3-amino-1,5-dihydropyridine-2,6-dione + O2 = indigoidine + 2 H2O. The protein operates within pigment biosynthesis. In terms of biological role, nonribosomal peptide synthetase involved in the biosynthesis of the blue pigment indigoidine. Catalyzes the synthesis of the blue pigment using L-Gln as a substrate. Two glutamine molecules are cyclized and oxidized to form indigoidine. The sequence is that of Indigoidine synthase from Streptomyces lavendulae.